The primary structure comprises 666 residues: Endogenous retrovirus group K member 24 Gag polyprotein (666 aa).

The N-myristoyl glycine moiety is linked to residue glycine 2. The interval 165–264 (GKGPELVGPS…APPSRQGSEL (100 aa)) is disordered. Over residues 232–247 (GMPPAPQGRAPYPQPP) the composition is skewed to pro residues. 2 consecutive CCHC-type zinc fingers follow at residues 544-561 (GKCYNCGQIGHLKKNCPV) and 580-597 (DLCPRCKKGKHWASQCRS). Residues 598 to 641 (KFDKNGQPLSGNEQRGQPQAPQQTGAFPIQPFVPQGFQGQQPPL) form a disordered region. Residues 604-622 (QPLSGNEQRGQPQAPQQTG) show a composition bias toward polar residues. The segment covering 624–640 (FPIQPFVPQGFQGQQPP) has biased composition (low complexity).

Belongs to the beta type-B retroviral Gag protein family. HERV class-II K(HML-2) gag subfamily. Myristoylation is essential for retroviral assembly. Alteration of the glycine residue leads to a block in the budding of particles and an accumulation of Gag inside the cell. Post-translationally, specific enzymatic cleavages may yield mature proteins.

The protein resides in the cell membrane. In terms of biological role, the products of the Gag polyproteins of infectious retroviruses perform highly complex orchestrated tasks during the assembly, budding, maturation, and infection stages of the viral replication cycle. During viral assembly, the proteins form membrane associations and self-associations that ultimately result in budding of an immature virion from the infected cell. Gag precursors also function during viral assembly to selectively bind and package two plus strands of genomic RNA. Endogenous Gag proteins may have kept, lost or modified their original function during evolution. The chain is Endogenous retrovirus group K member 24 Gag polyprotein (ERVK-24) from Homo sapiens (Human).